The following is a 292-amino-acid chain: Inhibitory synaptic factor 1 (292 aa).

The interval 1 to 25 (MNIRGAPDLGQPSDDPNSGGERERI) is disordered. The stretch at 30 to 63 (KMVIGQLEGILRELKEVAKELREVVSQIDKLTSD) forms a coiled coil. The interval 120-292 (TPSDSVDGPE…ATKQKAKGKN (173 aa)) is disordered. Basic and acidic residues predominate over residues 180-192 (GTRERVRFSDKVL). The span at 198 to 216 (CDDEEGDGEEGEEEEEGDL) shows a compositional bias: acidic residues. A compositionally biased stretch (polar residues) spans 263–285 (RNSSTQTVSDKSTQTVLPYTATK).

Belongs to the INSYN1 family. Interacts with GPHN.

It localises to the postsynaptic density. In terms of biological role, component of the protein machinery at the inhibitory synapses, probably acting as a scaffold. Inhibitory synapses dampen neuronal activity through postsynaptic hyperpolarization. This synaptic inhibition is fundamental for the functioning of the central nervous system, shaping and orchestrating the flow of information through neuronal networks to generate a precise neural code. The polypeptide is Inhibitory synaptic factor 1 (Insyn1) (Mus musculus (Mouse)).